Here is a 423-residue protein sequence, read N- to C-terminus: MKVDVLLGLQWGDEGKGKVVDVLTPKYDVVARFQGGPNAGHTLEFEGQKYVLRSIPSGIFQGDKVNIIGNGVVLDPALFKAEAEALEASGHNLKERLHISKKAHLILPTHRILDAAYEAAKGDAKVGTTGKGIGPTYTDKVSRNGVRVGDILHNFEQKYAAAKARHEQILKGLNYEYDLTELEKAWFEGIEYLKQFQLVDSEHEINGLLDNGKSILCEGAQGTMLDIDFGSYPFVTSSNTVCAGACTGLGVAPNKIGDVYGIFKAYCTRVGSGPFPTELFDKTGDQICTLGHEFGSVTGRKRRCGWVDLVALKYSIMVNGVTKLIMMKSDVLDTFETIKACVAYKMNGEEIDYFPYDITDEVEPIYVELPGWQTDMTKMQSEDEFPEEFNAYLSFLEEQLGVQIKIVSVGPDREQTIIRYTEE.

Residues G12–K18 and G40–T42 contribute to the GTP site. D13 (proton acceptor) is an active-site residue. D13 and G40 together coordinate Mg(2+). IMP-binding positions include D13–K16, N38–H41, T129, R143, Q221, T236, and R300. The active-site Proton donor is the H41. Position 296 to 302 (S296 to R302) interacts with substrate. GTP-binding positions include R302, K328–D330, and S408–G410.

This sequence belongs to the adenylosuccinate synthetase family. Homodimer. It depends on Mg(2+) as a cofactor.

It localises to the cytoplasm. The catalysed reaction is IMP + L-aspartate + GTP = N(6)-(1,2-dicarboxyethyl)-AMP + GDP + phosphate + 2 H(+). Its pathway is purine metabolism; AMP biosynthesis via de novo pathway; AMP from IMP: step 1/2. Its function is as follows. Plays an important role in the de novo pathway of purine nucleotide biosynthesis. Catalyzes the first committed step in the biosynthesis of AMP from IMP. The sequence is that of Adenylosuccinate synthetase from Bacteroides fragilis (strain ATCC 25285 / DSM 2151 / CCUG 4856 / JCM 11019 / LMG 10263 / NCTC 9343 / Onslow / VPI 2553 / EN-2).